The sequence spans 124 residues: Large ribosomal subunit protein bL12c (124 aa).

Belongs to the bacterial ribosomal protein bL12 family. As to quaternary structure, homodimer. Part of the ribosomal stalk of the 50S ribosomal subunit. Forms a multimeric L10(L12)X complex, where L10 forms an elongated spine to which 2 to 4 L12 dimers bind in a sequential fashion. Binds GTP-bound translation factors.

It is found in the plastid. Its subcellular location is the chloroplast. In terms of biological role, forms part of the ribosomal stalk which helps the ribosome interact with GTP-bound translation factors. Is thus essential for accurate translation. The chain is Large ribosomal subunit protein bL12c from Cyanidioschyzon merolae (strain NIES-3377 / 10D) (Unicellular red alga).